The primary structure comprises 360 residues: Photosystem II protein D1 (360 aa).

3 helical membrane passes run Y30–I47, H119–L134, and W143–A157. H119 contacts chlorophyll a. W127 provides a ligand contact to pheophytin a. Residues D171 and E190 each coordinate [CaMn4O5] cluster. The chain crosses the membrane as a helical span at residues F198–L219. H199 serves as a coordination point for chlorophyll a. A quinone-binding positions include H216 and S265 to F266. Position 216 (H216) interacts with Fe cation. H273 is a Fe cation binding site. A helical transmembrane segment spans residues F275–M289. [CaMn4O5] cluster contacts are provided by H333, E334, D343, and A345. The propeptide occupies A346–G360.

The protein belongs to the reaction center PufL/M/PsbA/D family. PSII is composed of 1 copy each of membrane proteins PsbA, PsbB, PsbC, PsbD, PsbE, PsbF, PsbH, PsbI, PsbJ, PsbK, PsbL, PsbM, PsbT, PsbX, PsbY, Psb30/Ycf12, peripheral proteins PsbO, CyanoQ (PsbQ), PsbU, PsbV and a large number of cofactors. It forms dimeric complexes. It depends on The D1/D2 heterodimer binds P680, chlorophylls that are the primary electron donor of PSII, and subsequent electron acceptors. It shares a non-heme iron and each subunit binds pheophytin, quinone, additional chlorophylls, carotenoids and lipids. D1 provides most of the ligands for the Mn4-Ca-O5 cluster of the oxygen-evolving complex (OEC). There is also a Cl(-1) ion associated with D1 and D2, which is required for oxygen evolution. The PSII complex binds additional chlorophylls, carotenoids and specific lipids. as a cofactor. Tyr-162 forms a radical intermediate that is referred to as redox-active TyrZ, YZ or Y-Z. In terms of processing, C-terminally processed by CtpA; processing is essential to allow assembly of the oxygen-evolving complex and thus photosynthetic growth.

Its subcellular location is the cellular thylakoid membrane. It catalyses the reaction 2 a plastoquinone + 4 hnu + 2 H2O = 2 a plastoquinol + O2. Its function is as follows. Photosystem II (PSII) is a light-driven water:plastoquinone oxidoreductase that uses light energy to abstract electrons from H(2)O, generating O(2) and a proton gradient subsequently used for ATP formation. It consists of a core antenna complex that captures photons, and an electron transfer chain that converts photonic excitation into a charge separation. The D1/D2 (PsbA/PsbD) reaction center heterodimer binds P680, the primary electron donor of PSII as well as several subsequent electron acceptors. This Prochlorococcus marinus (strain SARG / CCMP1375 / SS120) protein is Photosystem II protein D1.